Reading from the N-terminus, the 682-residue chain is Protein ACTIVITY OF BC1 COMPLEX KINASE 1, chloroplastic (682 aa).

Residues 1-79 constitute a chloroplast transit peptide; it reads MESIHCNSLL…NSTDASVMTT (79 aa). A Protein kinase domain is found at 236-567; sequence KISSQTIAAA…IQVLFKDGVF (332 aa). Residues 242–250 and K265 contribute to the ATP site; that span reads IAAASLGQV. Catalysis depends on D400, which acts as the Proton acceptor.

The protein belongs to the protein kinase superfamily. ADCK protein kinase family. Interacts with ABC1K3 in plastoglobules (PG). Expressed in all tissues (e.g. especially in leaves) at all developmental stages from seed germination to flowering, except in the root tips.

It localises to the plastid. It is found in the chloroplast. The protein localises to the plastoglobule. It catalyses the reaction L-seryl-[protein] + ATP = O-phospho-L-seryl-[protein] + ADP + H(+). It carries out the reaction L-threonyl-[protein] + ATP = O-phospho-L-threonyl-[protein] + ADP + H(+). Kinase that can phosphorylate the tocopherol cyclase VTE1, a key enzyme of tocopherol (vitamin E) metabolism and involved in the recycling of oxidated alpha-tocopherol quinone, possibly stabilizing it at plastoglobules. Also regulates plastoglobule protein composition. Prevents photodamage of chloroplasts under continuous red light, thus working in opposition to ABC1K3. Together with ABC1K1, contributes to plastoglobule (PG) function in prenyl-lipid metabolism, stress response, and thylakoid remodeling. Involved in chlorophyll degradation and in the maintenance of the number of chlorophyll-binding photosynthetic thylakoid membranes. Ensures photosynthetic electron transport by regulating the homeostasis of plastoquinone, beta-carotene and xanthophyll lutein, as well as membrane antioxidant tocopherol metabolism. Seems to affect specifically stability or turnover of D1 protein, product of psbA, one of the four core subunits of the photosystem II (PSII). Required for photooxidative stress responses, including the induction of oxidative stress response genes (e.g. FSD1, CSD1, CAT1, and UTG71C1), to prevent photosystem II core and chlorophyll degradations. This Arabidopsis thaliana (Mouse-ear cress) protein is Protein ACTIVITY OF BC1 COMPLEX KINASE 1, chloroplastic.